The chain runs to 311 residues: Putative S-adenosyl-L-methionine-dependent methyltransferase MRA_0152 (311 aa).

S-adenosyl-L-methionine contacts are provided by residues Asp-135 and 164–165; that span reads DL.

This sequence belongs to the UPF0677 family.

Exhibits S-adenosyl-L-methionine-dependent methyltransferase activity. The chain is Putative S-adenosyl-L-methionine-dependent methyltransferase MRA_0152 from Mycobacterium tuberculosis (strain ATCC 25177 / H37Ra).